Here is a 152-residue protein sequence, read N- to C-terminus: UPF0225 protein YchJ (152 aa).

Belongs to the UPF0225 family.

The polypeptide is UPF0225 protein YchJ (Escherichia coli O17:K52:H18 (strain UMN026 / ExPEC)).